The sequence spans 81 residues: MKTLLLTLVVVTIVCLDLGYTRKCNKLVPLFYKTCPAGKNLCYKMFMVSNLTVPVKRGCIDVCPKNSALVKYVCCNTDRCN.

A signal peptide spans 1–21 (MKTLLLTLVVVTIVCLDLGYT). 4 disulfide bridges follow: cysteine 24-cysteine 42, cysteine 35-cysteine 59, cysteine 63-cysteine 74, and cysteine 75-cysteine 80.

The protein belongs to the three-finger toxin family. Short-chain subfamily. Type IA cytotoxin sub-subfamily. In terms of assembly, monomer in solution; Homodimer and oligomer in the presence of negatively charged lipids forming a pore with a size ranging between 20 and 30 Angstroms. Expressed by the venom gland.

It is found in the secreted. The protein resides in the target cell membrane. Basic protein that bind to cell membrane and depolarizes cardiomyocytes. This cytotoxin also shows lytic activities, but 2-fold more important than that of CTX-A2. It binds to the integrin alpha-V/beta-3 with a moderate affinity. Inhibits protein kinase C. It may interact with sulfatides in the cell membrane, which induces pore formation and cell internalization and is responsible for cytotoxicity in cardiomyocytes. It may also target the mitochondrial membrane and induces mitochondrial swelling and fragmentation. The chain is Cytotoxin 4 from Naja atra (Chinese cobra).